Reading from the N-terminus, the 118-residue chain is Down syndrome critical region protein 4 (118 aa).

Residues 1–39 (MSLIILTRDDEPRIFTPDSDAASPALHSTSPLPDPASAS) form a disordered region. Positions 28–39 (STSPLPDPASAS) are enriched in low complexity.

As to expression, mainly expressed in placenta.

In Homo sapiens (Human), this protein is Down syndrome critical region protein 4 (DSCR4).